The primary structure comprises 225 residues: NAD(P)H-quinone oxidoreductase subunit K, chloroplastic (225 aa).

Residues Cys43, Cys44, Cys108, and Cys139 each contribute to the [4Fe-4S] cluster site.

It belongs to the complex I 20 kDa subunit family. In terms of assembly, NDH is composed of at least 16 different subunits, 5 of which are encoded in the nucleus. It depends on [4Fe-4S] cluster as a cofactor.

It is found in the plastid. It localises to the chloroplast thylakoid membrane. It catalyses the reaction a plastoquinone + NADH + (n+1) H(+)(in) = a plastoquinol + NAD(+) + n H(+)(out). The catalysed reaction is a plastoquinone + NADPH + (n+1) H(+)(in) = a plastoquinol + NADP(+) + n H(+)(out). Functionally, NDH shuttles electrons from NAD(P)H:plastoquinone, via FMN and iron-sulfur (Fe-S) centers, to quinones in the photosynthetic chain and possibly in a chloroplast respiratory chain. The immediate electron acceptor for the enzyme in this species is believed to be plastoquinone. Couples the redox reaction to proton translocation, and thus conserves the redox energy in a proton gradient. This Crucihimalaya wallichii (Rock-cress) protein is NAD(P)H-quinone oxidoreductase subunit K, chloroplastic.